Consider the following 172-residue polypeptide: NADH-quinone oxidoreductase subunit B (172 aa).

[4Fe-4S] cluster contacts are provided by C46, C47, C111, and C141.

The protein belongs to the complex I 20 kDa subunit family. NDH-1 is composed of 14 different subunits. Subunits NuoB, C, D, E, F, and G constitute the peripheral sector of the complex. [4Fe-4S] cluster serves as cofactor.

The protein localises to the cell membrane. The enzyme catalyses a quinone + NADH + 5 H(+)(in) = a quinol + NAD(+) + 4 H(+)(out). In terms of biological role, NDH-1 shuttles electrons from NADH, via FMN and iron-sulfur (Fe-S) centers, to quinones in the respiratory chain. The immediate electron acceptor for the enzyme in this species is believed to be a menaquinone. Couples the redox reaction to proton translocation (for every two electrons transferred, four hydrogen ions are translocated across the cytoplasmic membrane), and thus conserves the redox energy in a proton gradient. The protein is NADH-quinone oxidoreductase subunit B of Brevibacillus brevis (strain 47 / JCM 6285 / NBRC 100599).